The sequence spans 609 residues: NADH-ubiquinone oxidoreductase chain 5 (609 aa).

15 helical membrane-spanning segments follow: residues 6–26, 35–55, 84–104, 116–138, 140–160, 171–191, 240–260, 272–292, 300–319, 330–350, 365–385, 409–429, 456–476, 481–501, and 581–601; these read SSILMILILLTTPIIISMTNL, YATSSIKFSFLLSLLPLLLFF, YFSILFLSVALFVTWSIMQFS, RFIKYLMMFLITMLILTSANNLF, LFIGWEGVGIMSFLLIGWWYG, AILYNRVGDIGFILAMTWFCL, TPVSALLHSSTMVVAGIFLMI, IMTAMLCLGAITTLFTAICAL, IVAFSTSSQLGLMMVTLGIN, THAFFKAMLFMCSGSIIHSLN, MPFTSSCLIIGSLALTGMPFL, MITLIATSMTAVYSMRIIYFV, LALGSILAGFLISLNIPPTNI, MPWHLKMTALLITILGFAIAL, and GLIKLYFLSFLITISLIFILH.

This sequence belongs to the complex I subunit 5 family. Core subunit of respiratory chain NADH dehydrogenase (Complex I) which is composed of 45 different subunits.

The protein localises to the mitochondrion inner membrane. The enzyme catalyses a ubiquinone + NADH + 5 H(+)(in) = a ubiquinol + NAD(+) + 4 H(+)(out). Core subunit of the mitochondrial membrane respiratory chain NADH dehydrogenase (Complex I) which catalyzes electron transfer from NADH through the respiratory chain, using ubiquinone as an electron acceptor. Essential for the catalytic activity and assembly of complex I. The polypeptide is NADH-ubiquinone oxidoreductase chain 5 (Rattus norvegicus (Rat)).